A 155-amino-acid chain; its full sequence is Large ribosomal subunit protein bL9c (155 aa).

Belongs to the bacterial ribosomal protein bL9 family.

Its subcellular location is the plastid. It is found in the chloroplast. Functionally, binds to the 23S rRNA. In Pyropia yezoensis (Susabi-nori), this protein is Large ribosomal subunit protein bL9c.